Reading from the N-terminus, the 228-residue chain is Histidine/lysine/arginine/ornithine transport system permease protein HisQ (228 aa).

At 1-12 (MLYGFSGVILQG) the chain is on the periplasmic side. The chain crosses the membrane as a helical span at residues 13 to 33 (ALVTLELAISSVVLAVIIGLI). In terms of domain architecture, ABC transmembrane type-1 spans 13-212 (ALVTLELAIS…VFTTVSNGVL (200 aa)). Residues 34–58 (GAGGKLSQNRLSGLIFEGYTTLIRG) are Cytoplasmic-facing. The chain crosses the membrane as a helical span at residues 59–79 (VPDLVLMLLIFYGLQIALNTV). At 80–87 (TEAMGVGQ) the chain is on the periplasmic side. Residues 88–108 (IDIDPMVAGIITLGFIYGAYF) traverse the membrane as a helical segment. Residues 109–148 (TETFRGAFMAVPKGHIEAATAFGFTRGQVFRRIMFPSMMR) are Cytoplasmic-facing. The chain crosses the membrane as a helical span at residues 149–171 (YALPGIGNNWQVILKSTALVSLL). The Periplasmic portion of the chain corresponds to 172 to 194 (GLEDVVKATQLAGKSTWEPFYFA). A helical transmembrane segment spans residues 195–215 (IVCGVIYLVFTTVSNGVLLFL). At 216-228 (ERRYSVGVKRADL) the chain is on the cytoplasmic side.

Belongs to the binding-protein-dependent transport system permease family. HisMQ subfamily. The HisPMQJ complex is composed of two ATP-binding proteins (HisP), two transmembrane proteins (HisM and HisQ) and a solute-binding protein (HisJ). The HisPMQ-ArgT complex is composed of two ATP-binding proteins (HisP), two transmembrane proteins (HisM and HisQ) and a solute-binding protein (ArgT).

It is found in the cell inner membrane. Its function is as follows. Part of the ABC transporter complex HisPMQJ involved in histidine transport. Is also part of the ABC transporter complex HisPMQ-ArgT involved in lysine/arginine/ornithine transport. Probably responsible for the translocation of the substrate across the membrane. The chain is Histidine/lysine/arginine/ornithine transport system permease protein HisQ (hisQ) from Escherichia coli (strain K12).